Reading from the N-terminus, the 129-residue chain is MAKKTVAAKKRNVKVDAYGQAHIHSSFNNIIVSLANSEGQVISWSSAGKMGFRSSKKNTPYAAQMAAQDCAKVAYDLGLRKVKVFVKGPGNGRESAIRTIHGAGIEVTEIVDVTPLPHNGCRPPKKRRV.

The protein belongs to the universal ribosomal protein uS11 family. Part of the 30S ribosomal subunit. Interacts with proteins S7 and S18. Binds to IF-3.

Functionally, located on the platform of the 30S subunit, it bridges several disparate RNA helices of the 16S rRNA. Forms part of the Shine-Dalgarno cleft in the 70S ribosome. The chain is Small ribosomal subunit protein uS11 from Parabacteroides distasonis (strain ATCC 8503 / DSM 20701 / CIP 104284 / JCM 5825 / NCTC 11152).